A 211-amino-acid chain; its full sequence is Pyridoxine/pyridoxamine 5'-phosphate oxidase (211 aa).

Residues 7-10 and K65 each bind substrate; that span reads RREY. FMN-binding positions include 60 to 65, 75 to 76, R81, K82, and Q104; these read RIVLLK and YT. The substrate site is built by Y122, R126, and S130. FMN contacts are provided by residues 139–140 and W184; that span reads QS. Residue 190-192 coordinates substrate; the sequence is RLH. An FMN-binding site is contributed by R194.

This sequence belongs to the pyridoxamine 5'-phosphate oxidase family. Homodimer. FMN is required as a cofactor.

It catalyses the reaction pyridoxamine 5'-phosphate + O2 + H2O = pyridoxal 5'-phosphate + H2O2 + NH4(+). The enzyme catalyses pyridoxine 5'-phosphate + O2 = pyridoxal 5'-phosphate + H2O2. The protein operates within cofactor metabolism; pyridoxal 5'-phosphate salvage; pyridoxal 5'-phosphate from pyridoxamine 5'-phosphate: step 1/1. Its pathway is cofactor metabolism; pyridoxal 5'-phosphate salvage; pyridoxal 5'-phosphate from pyridoxine 5'-phosphate: step 1/1. In terms of biological role, catalyzes the oxidation of either pyridoxine 5'-phosphate (PNP) or pyridoxamine 5'-phosphate (PMP) into pyridoxal 5'-phosphate (PLP). The sequence is that of Pyridoxine/pyridoxamine 5'-phosphate oxidase from Vibrio cholerae serotype O1 (strain ATCC 39315 / El Tor Inaba N16961).